The chain runs to 310 residues: L-lactate dehydrogenase (310 aa).

3 residues coordinate NAD(+): Val11, Asp32, and Arg37. Residues Gln79, Arg85, and Asn117–Asp120 contribute to the substrate site. NAD(+) is bound by residues Val115–Asn117 and Thr140. Asp145–Arg148 lines the substrate pocket. Residues Arg150 and His165 each coordinate beta-D-fructose 1,6-bisphosphate. His172 serves as the catalytic Proton acceptor. Tyr221 is subject to Phosphotyrosine. Thr230 provides a ligand contact to substrate.

Belongs to the LDH/MDH superfamily. LDH family. In terms of assembly, homotetramer.

The protein localises to the cytoplasm. The enzyme catalyses (S)-lactate + NAD(+) = pyruvate + NADH + H(+). It functions in the pathway fermentation; pyruvate fermentation to lactate; (S)-lactate from pyruvate: step 1/1. Its activity is regulated as follows. Allosterically activated by fructose 1,6-bisphosphate (FBP). Its function is as follows. Catalyzes the conversion of lactate to pyruvate. This chain is L-lactate dehydrogenase, found in Fervidobacterium nodosum (strain ATCC 35602 / DSM 5306 / Rt17-B1).